Consider the following 191-residue polypeptide: Cell division protein SepF (191 aa).

A compositionally biased stretch (low complexity) spans 151–164; that stretch reads SSSPEEASPSSVST. The tract at residues 151–191 is disordered; the sequence is SSSPEEASPSSVSTEKTPQYSLGKNTTPEPAWGNSKLSAYS. A compositionally biased stretch (polar residues) spans 165–178; it reads EKTPQYSLGKNTTP.

It belongs to the SepF family. In terms of assembly, homodimer. Interacts with FtsZ.

The protein localises to the cytoplasm. In terms of biological role, cell division protein that is part of the divisome complex and is recruited early to the Z-ring. Probably stimulates Z-ring formation, perhaps through the cross-linking of FtsZ protofilaments. Its function overlaps with FtsA. The polypeptide is Cell division protein SepF (Prochlorococcus marinus (strain MIT 9301)).